The chain runs to 291 residues: Farnesyl diphosphate synthase (291 aa).

Positions 44, 47, and 76 each coordinate isopentenyl diphosphate. The Mg(2+) site is built by D83 and D89. R94 serves as a coordination point for (2E)-geranyl diphosphate. Residue R95 participates in isopentenyl diphosphate binding. (2E)-geranyl diphosphate is bound by residues K177, T178, Q215, and K232.

Belongs to the FPP/GGPP synthase family. It depends on Mg(2+) as a cofactor.

Its subcellular location is the cytoplasm. The catalysed reaction is isopentenyl diphosphate + (2E)-geranyl diphosphate = (2E,6E)-farnesyl diphosphate + diphosphate. The protein is Farnesyl diphosphate synthase (fps) of Micrococcus luteus (Micrococcus lysodeikticus).